The primary structure comprises 295 residues: Ribosomal protein L11 methyltransferase (295 aa).

4 residues coordinate S-adenosyl-L-methionine: threonine 150, glycine 171, aspartate 193, and asparagine 232.

It belongs to the methyltransferase superfamily. PrmA family.

It is found in the cytoplasm. The catalysed reaction is L-lysyl-[protein] + 3 S-adenosyl-L-methionine = N(6),N(6),N(6)-trimethyl-L-lysyl-[protein] + 3 S-adenosyl-L-homocysteine + 3 H(+). Functionally, methylates ribosomal protein L11. This is Ribosomal protein L11 methyltransferase from Neisseria meningitidis serogroup C / serotype 2a (strain ATCC 700532 / DSM 15464 / FAM18).